A 524-amino-acid chain; its full sequence is Glutamyl-tRNA(Gln) amidotransferase subunit A, mitochondrial (524 aa).

Lysine 76 acts as the Charge relay system in catalysis. The disordered stretch occupies residues 146–168 (KQYRGKGSPDSSQEDQEPQWLVA). The active-site Charge relay system is serine 171. Serine 195 (acyl-ester intermediate) is an active-site residue.

This sequence belongs to the amidase family. GatA subfamily. Subunit of the heterotrimeric GatCAB amidotransferase (AdT) complex, composed of A (QRSL1), B (GATB) and C (GATC) subunits.

The protein resides in the mitochondrion. The catalysed reaction is L-glutamyl-tRNA(Gln) + L-glutamine + ATP + H2O = L-glutaminyl-tRNA(Gln) + L-glutamate + ADP + phosphate + H(+). Functionally, allows the formation of correctly charged Gln-tRNA(Gln) through the transamidation of misacylated Glu-tRNA(Gln) in the mitochondria. The reaction takes place in the presence of glutamine and ATP through an activated gamma-phospho-Glu-tRNA(Gln). The protein is Glutamyl-tRNA(Gln) amidotransferase subunit A, mitochondrial of Ornithorhynchus anatinus (Duckbill platypus).